Reading from the N-terminus, the 1482-residue chain is Type VII secretion system protein EssC (1482 aa).

At 1 to 229 the chain is on the cytoplasmic side; the sequence is MHKLIIKYNK…RPPQPIQKNN (229 aa). A helical transmembrane segment spans residues 230–252; the sequence is TVIWRSIIPPLVMIALTVVIFLV. At 253 to 256 the chain is on the extracellular side; it reads RPIG. The chain crosses the membrane as a helical span at residues 257–279; it reads IYILMMIGMSTVTIVFGITTYFS. The Cytoplasmic segment spans residues 280-1482; it reads EKKKYNKDVE…EYQKIKLMEG (1203 aa). FtsK domains lie at 652–846 and 997–1183; these read DDIL…QDSN and QGPM…NELT. ATP-binding positions include 672–679 and 1014–1021; these read GTTGSGKS and GSPGYGRT.

It belongs to the EssC family. Homooligomer. Interacts with EsaE.

The protein localises to the cell membrane. Functionally, component of the type VII secretion system (Ess). Required for the secretion of substrates including EsxA and EsxB. However, unable to support secretion of the substrate protein EsxC. The sequence is that of Type VII secretion system protein EssC from Staphylococcus aureus (strain MRSA252).